The chain runs to 300 residues: Acetylglutamate kinase (300 aa).

Residues Gly73–Gly74, Arg95, and Asn197 each bind substrate.

Belongs to the acetylglutamate kinase family. ArgB subfamily.

The protein resides in the cytoplasm. The catalysed reaction is N-acetyl-L-glutamate + ATP = N-acetyl-L-glutamyl 5-phosphate + ADP. It participates in amino-acid biosynthesis; L-arginine biosynthesis; N(2)-acetyl-L-ornithine from L-glutamate: step 2/4. In terms of biological role, catalyzes the ATP-dependent phosphorylation of N-acetyl-L-glutamate. In Bordetella avium (strain 197N), this protein is Acetylglutamate kinase.